The primary structure comprises 127 residues: Anti-adapter protein IraD (127 aa).

This sequence belongs to the GpW/Gp25 family. IraD subfamily. As to quaternary structure, interacts with RssB.

The protein resides in the cytoplasm. In terms of biological role, inhibits RpoS proteolysis by regulating RssB activity, thereby increasing the stability of the sigma stress factor RpoS during oxidative stress. Its effect on RpoS stability is due to its interaction with RssB, which probably blocks the interaction of RssB with RpoS, and the consequent delivery of the RssB-RpoS complex to the ClpXP protein degradation pathway. The chain is Anti-adapter protein IraD from Escherichia coli O6:H1 (strain CFT073 / ATCC 700928 / UPEC).